A 227-amino-acid chain; its full sequence is Cytidylate kinase (227 aa).

12–20 contributes to the ATP binding site; it reads GPSGVGKGT.

The protein belongs to the cytidylate kinase family. Type 1 subfamily.

It is found in the cytoplasm. It catalyses the reaction CMP + ATP = CDP + ADP. It carries out the reaction dCMP + ATP = dCDP + ADP. The polypeptide is Cytidylate kinase (Shewanella denitrificans (strain OS217 / ATCC BAA-1090 / DSM 15013)).